Reading from the N-terminus, the 229-residue chain is uncharacterized protein (229 aa).

The S4 RNA-binding domain occupies 2-69 (QRLAKIISNA…KPRLWIYYKP (68 aa)). Aspartate 102 functions as the Nucleophile in the catalytic mechanism.

The protein belongs to the pseudouridine synthase RsuA family.

It carries out the reaction a uridine in RNA = a pseudouridine in RNA. This is an uncharacterized protein from Rickettsia felis (strain ATCC VR-1525 / URRWXCal2) (Rickettsia azadi).